Consider the following 357-residue polypeptide: Alpha-2-macroglobulin receptor-associated protein (357 aa).

The signal sequence occupies residues 1–34 (MAPRRVRSFLRGLPALLLLLLFLGPWPAASHGGK). Residues 32 to 52 (GGKYSREKNQPKPSPKRESGE) form a disordered region. Basic and acidic residues predominate over residues 35 to 52 (YSREKNQPKPSPKRESGE). 2 positions are modified to phosphoserine: serine 50 and serine 135. Residues 219–310 (SRHTELKEKL…AHEKLRHAES (92 aa)) are a coiled coil. The segment at 237-353 (RLRRVSHQGY…DLSGRISRAR (117 aa)) is LDL receptor binding. Threonine 248 bears the Phosphothreonine mark. An N-linked (GlcNAc...) asparagine glycan is attached at asparagine 268. The Prevents secretion from ER signature appears at 354–357 (HNEL).

The protein belongs to the alpha-2-MRAP family. In terms of assembly, interacts with the LRP1/alpha-2-macroglobulin receptor heavy and light chains; the interaction is transient and coincides with a reduction of ligand binding by the receptor. Interacts with LRP2/glycoprotein 330. Interacts with LRP1B; binding is followed by internalization and degradation. Interacts with LDLR. Interacts with SORL1. Interacts with LRP1; this interaction is followed by rapid internalization. In terms of processing, N-glycosylated.

Its subcellular location is the rough endoplasmic reticulum lumen. It localises to the endoplasmic reticulum-Golgi intermediate compartment lumen. The protein resides in the golgi apparatus. The protein localises to the cis-Golgi network. It is found in the golgi apparatus lumen. Its subcellular location is the endosome lumen. It localises to the cell surface. Molecular chaperone for LDL receptor-related proteins that may regulate their ligand binding activity along the secretory pathway. In Homo sapiens (Human), this protein is Alpha-2-macroglobulin receptor-associated protein.